The sequence spans 200 residues: 3-isopropylmalate dehydratase small subunit (200 aa).

This sequence belongs to the LeuD family. LeuD type 1 subfamily. Heterodimer of LeuC and LeuD.

The enzyme catalyses (2R,3S)-3-isopropylmalate = (2S)-2-isopropylmalate. Its pathway is amino-acid biosynthesis; L-leucine biosynthesis; L-leucine from 3-methyl-2-oxobutanoate: step 2/4. In terms of biological role, catalyzes the isomerization between 2-isopropylmalate and 3-isopropylmalate, via the formation of 2-isopropylmaleate. This chain is 3-isopropylmalate dehydratase small subunit, found in Photobacterium profundum (strain SS9).